The following is a 417-amino-acid chain: Divinyl chlorophyllide a 8-vinyl-reductase, chloroplastic (417 aa).

The transit peptide at 1–49 (MSLCSSFNVFASYSPKPKTIFKDSKFISQFQVKSSPLASTFHTNESSTS) directs the protein to the chloroplast.

Highly expressed in leaves, stems and flower buds. Detected in roots.

The protein localises to the plastid. Its subcellular location is the chloroplast. It carries out the reaction protochlorophyllide a + NADP(+) = 3,8-divinyl protochlorophyllide a + NADPH + H(+). Its pathway is porphyrin-containing compound metabolism; chlorophyll biosynthesis. Functionally, catalyzes the conversion of divinyl chlorophyllide to monovinyl chlorophyllide. Reduces the 8-vinyl group of the tetrapyrrole to an ethyl group using NADPH as the reductant. The best substrate is (3,8-divinyl)-chlorophyllide a (DV-Chlidea). Very low activity with (3,8-divinyl)-protochlorophyllide a (DV-Pchlidea) and (3,8-divinyl)-magnesium-protoporphyrin IX monomethyl ester (DV-MPE). No activity with (3,8-divinyl)-chlorophyllide b (DV-Chlideb), (3,8-divinyl)-magnesium-protoporphyrin IX (DV-Mg-Proto) and either (3,8-divinyl)-chlorophyll a (DV-Chla) or b (DV-Chlb). In Arabidopsis thaliana (Mouse-ear cress), this protein is Divinyl chlorophyllide a 8-vinyl-reductase, chloroplastic (DVR).